The chain runs to 750 residues: MRIEKHRTPLSKGIIWTILSVCLLFMFTTLILVIVATAGSTANYKPLTNIYIGEADIKHINVSKVIPQIGPILTILGSALTAPNSSLDDIFGAMKNIADTPALTPLLTLLSNADNTTVTIESLTELAPLAISGNPASSTRQLTEINGLLKYSDNATETLDGLSRLVSASLSSASSNSSSDSTTLVLDLLKDSDNPQNSTDALLTLNNLTMSEKAQLLPVFRLFAFSTNQTATMTALATLMNTTISSSLAQTLLTQLQNTISNGGSLNNTFSTLQPLVPQASAPAFDAVELLLNQTTSTNQTLSTLSDLLEQNLTQSSSAKKAFAALTQLMENSDNSTMVVTSVQSLAAVTNTTQSTQQLIGLDDVISSSSNTNETLSILSELQSGLSGNSSSVQYIPYLFSLLGASTDPKTTFSSLVTLTSWAQENPQTFLPILDILADAKSVQPISAEELNAMTPNILEYLKIPIYYRLSIFTLCHANLENKILDCNSPHAVQNLDFRSIIYDALVTSDFQPYLNALNISANDLYLEGKLLHREHQYVPAVRSVLALNLLAIIFSFFTMIFIILLYFNRYMFKQPLWLIALALHVCVGVATVLAAIIISVMIAIIKSGTADDKYGVVFKAGPAYTGLIWTAFALSFIATGLIIYTWWRNRRSGRYMSGSVTNRKGEIYTYGDGSAISADRFGDHNLGDDDDADFEKQVNRNEITAIDNSSSANNTDVTGSTSNRTELSHPDVTPKDSNGPVNNNAHLVA.

18 N-linked (GlcNAc...) asparagine glycosylation sites follow: asparagine 61, asparagine 84, asparagine 115, asparagine 154, asparagine 176, asparagine 197, asparagine 207, asparagine 228, asparagine 241, asparagine 267, asparagine 293, asparagine 299, asparagine 312, asparagine 335, asparagine 351, asparagine 373, asparagine 389, and asparagine 519. Serine 675 and serine 678 each carry phosphoserine. Residue lysine 697 forms a Glycyl lysine isopeptide (Lys-Gly) (interchain with G-Cter in ubiquitin) linkage. Composition is skewed to polar residues over residues 703–726 and 736–750; these read EITA…SNRT and KDSN…HLVA. Residues 703-750 form a disordered region; it reads EITAIDNSSSANNTDVTGSTSNRTELSHPDVTPKDSNGPVNNNAHLVA. Residues asparagine 709, asparagine 714, and asparagine 724 are each glycosylated (N-linked (GlcNAc...) asparagine).

In terms of processing, N-glycosylated.

The protein localises to the mitochondrion. This is an uncharacterized protein from Saccharomyces cerevisiae (strain ATCC 204508 / S288c) (Baker's yeast).